A 319-amino-acid chain; its full sequence is MKRSTILGIGSYLPKKIVTNDELALTVETSDEWIVKRTGIKQRHIAENNEMTSDMAANAARLALTDACVHKDDIGLIIVATTTPDRTFPSCATIVQDKLECKNAFAFDIQAVCSGFVYAISIADNFIKSGQVNTALVIGAEIMSRILDWQDRSTCVLFGDGAGAVVLGNNSEKDSGIISTILHSDGAFCDLLYTTGGTAYNGHAGTICMNGTIVFEHAIEKLSASILEILDQNDLEINDVDWFVLHQANIRIIELVARRLKIPYEKMVVSVNWHGNTSAASIPLALSYAKSSGKLKKHDIAILAAIGGGFTWGTCLVRI.

Residues cysteine 113 and histidine 246 contribute to the active site. Residues 247–251 form an ACP-binding region; that stretch reads QANIR. Asparagine 276 is a catalytic residue.

The protein belongs to the thiolase-like superfamily. FabH family. In terms of assembly, homodimer.

The protein localises to the cytoplasm. The enzyme catalyses malonyl-[ACP] + acetyl-CoA + H(+) = 3-oxobutanoyl-[ACP] + CO2 + CoA. It participates in lipid metabolism; fatty acid biosynthesis. Catalyzes the condensation reaction of fatty acid synthesis by the addition to an acyl acceptor of two carbons from malonyl-ACP. Catalyzes the first condensation reaction which initiates fatty acid synthesis and may therefore play a role in governing the total rate of fatty acid production. Possesses both acetoacetyl-ACP synthase and acetyl transacylase activities. Its substrate specificity determines the biosynthesis of branched-chain and/or straight-chain of fatty acids. This Ehrlichia chaffeensis (strain ATCC CRL-10679 / Arkansas) protein is Beta-ketoacyl-[acyl-carrier-protein] synthase III.